A 361-amino-acid polypeptide reads, in one-letter code: Transcription factor TCP10 (361 aa).

The TCP domain occupies 29-87 (RKDRHSKVFTSKGPRDRRVRLSAHTAIQFYDVQDRLGYDRPSKAVDWLIKKAKTAIDKL). Disordered stretches follow at residues 220 to 259 (DLTM…QPSM) and 295 to 317 (SWDH…SMFA). The span at 295–304 (SWDHHQTTSD) shows a compositional bias: basic and acidic residues.

In terms of assembly, interacts with AHP1, AHP2 and AHP3. Interacts with SPL. In terms of tissue distribution, mostly detected in lateral organs, such as leaves and flowers. Expressed in cotyledons, particularly in the vascular region, in leaves, roots, stems, buds, flowers and immature siliques.

It is found in the nucleus. Plays a pivotal role in the control of morphogenesis of shoot organs by negatively regulating the expression of boundary-specific genes such as CUC genes, probably through the induction of miRNA (e.g. miR164). Participates in ovule development. The chain is Transcription factor TCP10 (TCP10) from Arabidopsis thaliana (Mouse-ear cress).